Reading from the N-terminus, the 210-residue chain is Putative cutinase (210 aa).

Residues Asp26–Gly38 are compositionally biased toward basic and acidic residues. Residues Asp26–Ala58 are disordered. The span at Ser49 to Ala58 shows a compositional bias: low complexity.

It catalyses the reaction cutin + H2O = cutin monomers.. This is Putative cutinase from Phytophthora capsici.